Reading from the N-terminus, the 127-residue chain is MSKVQEILEAVKSLTVLELAELVKAFEEEFGVSAAAPVAVAAAPAAGAAAAAPAQEEKTEFDVILVSPGAQKVNVIKVVREITGLGLKESKDLVDGAPKPVKEKVSKADAEAIKAKLEEVGATVEIK.

It belongs to the bacterial ribosomal protein bL12 family. Homodimer. Part of the ribosomal stalk of the 50S ribosomal subunit. Forms a multimeric L10(L12)X complex, where L10 forms an elongated spine to which 2 to 4 L12 dimers bind in a sequential fashion. Binds GTP-bound translation factors.

Functionally, forms part of the ribosomal stalk which helps the ribosome interact with GTP-bound translation factors. Is thus essential for accurate translation. In Carboxydothermus hydrogenoformans (strain ATCC BAA-161 / DSM 6008 / Z-2901), this protein is Large ribosomal subunit protein bL12.